Consider the following 246-residue polypeptide: 1-(5-phosphoribosyl)-5-[(5-phosphoribosylamino)methylideneamino] imidazole-4-carboxamide isomerase (246 aa).

Catalysis depends on D8, which acts as the Proton acceptor. D129 (proton donor) is an active-site residue.

The protein belongs to the HisA/HisF family.

Its subcellular location is the cytoplasm. The enzyme catalyses 1-(5-phospho-beta-D-ribosyl)-5-[(5-phospho-beta-D-ribosylamino)methylideneamino]imidazole-4-carboxamide = 5-[(5-phospho-1-deoxy-D-ribulos-1-ylimino)methylamino]-1-(5-phospho-beta-D-ribosyl)imidazole-4-carboxamide. It functions in the pathway amino-acid biosynthesis; L-histidine biosynthesis; L-histidine from 5-phospho-alpha-D-ribose 1-diphosphate: step 4/9. The sequence is that of 1-(5-phosphoribosyl)-5-[(5-phosphoribosylamino)methylideneamino] imidazole-4-carboxamide isomerase from Methylocella silvestris (strain DSM 15510 / CIP 108128 / LMG 27833 / NCIMB 13906 / BL2).